A 98-amino-acid polypeptide reads, in one-letter code: MSADAKHYDVIRKPLITEKTTMASENGAVVFEVAIDSNKPQIKEAVEAVFGVKVKAVNTTITKGKVKRFRGQLGTRKDVKKAYVTLEEGNTIDVSTGL.

Belongs to the universal ribosomal protein uL23 family. In terms of assembly, part of the 50S ribosomal subunit. Contacts protein L29, and trigger factor when it is bound to the ribosome.

Its function is as follows. One of the early assembly proteins it binds 23S rRNA. One of the proteins that surrounds the polypeptide exit tunnel on the outside of the ribosome. Forms the main docking site for trigger factor binding to the ribosome. This chain is Large ribosomal subunit protein uL23, found in Jannaschia sp. (strain CCS1).